Reading from the N-terminus, the 262-residue chain is Ubiquitin thioesterase otubain-like (262 aa).

The OTU domain occupies lysine 64–asparagine 262. Residue aspartate 72 is part of the active site. Cysteine 75 acts as the Nucleophile in catalysis. Isoleucine 168 provides a ligand contact to substrate. Residue histidine 255 is part of the active site.

Belongs to the peptidase C65 family.

The enzyme catalyses Thiol-dependent hydrolysis of ester, thioester, amide, peptide and isopeptide bonds formed by the C-terminal Gly of ubiquitin (a 76-residue protein attached to proteins as an intracellular targeting signal).. Functionally, possible hydrolase that can remove conjugated ubiquitin from proteins in vitro and may therefore play an important regulatory role at the level of protein turnover by preventing degradation. The chain is Ubiquitin thioesterase otubain-like from Drosophila melanogaster (Fruit fly).